A 203-amino-acid polypeptide reads, in one-letter code: Histidine biosynthesis bifunctional protein HisIE (203 aa).

A phosphoribosyl-AMP cyclohydrolase region spans residues M1–F114. The segment at L115–Q203 is phosphoribosyl-ATP pyrophosphohydrolase.

This sequence in the N-terminal section; belongs to the PRA-CH family. In the C-terminal section; belongs to the PRA-PH family.

It localises to the cytoplasm. The enzyme catalyses 1-(5-phospho-beta-D-ribosyl)-ATP + H2O = 1-(5-phospho-beta-D-ribosyl)-5'-AMP + diphosphate + H(+). The catalysed reaction is 1-(5-phospho-beta-D-ribosyl)-5'-AMP + H2O = 1-(5-phospho-beta-D-ribosyl)-5-[(5-phospho-beta-D-ribosylamino)methylideneamino]imidazole-4-carboxamide. The protein operates within amino-acid biosynthesis; L-histidine biosynthesis; L-histidine from 5-phospho-alpha-D-ribose 1-diphosphate: step 2/9. It functions in the pathway amino-acid biosynthesis; L-histidine biosynthesis; L-histidine from 5-phospho-alpha-D-ribose 1-diphosphate: step 3/9. In Escherichia coli O6:H1 (strain CFT073 / ATCC 700928 / UPEC), this protein is Histidine biosynthesis bifunctional protein HisIE.